Reading from the N-terminus, the 242-residue chain is MRPTGRAAEQVRPITITRHYTKHAEGSVLVEFGDTKVLCNASVEEGVPRFLKGQGQGWVTAEYGMLPRSTHTRNAREAARGKQGGRTMEIQRLIARSLRAAVDLKKLGEYTITLDCDVIQADGGTRTASITGACVALVDALNKIVEAGKLKESPLKSMVAAVSVGIVDGEGRCDLEYVEDSAAETDMNVVMMEDGRMIEVQGTAEGEPFSHDELLSLLALAKGGLEDIFDAQRNALKQNALK.

Residues arginine 86 and 124–126 (GTR) each bind phosphate.

This sequence belongs to the RNase PH family. As to quaternary structure, homohexameric ring arranged as a trimer of dimers.

The catalysed reaction is tRNA(n+1) + phosphate = tRNA(n) + a ribonucleoside 5'-diphosphate. Functionally, phosphorolytic 3'-5' exoribonuclease that plays an important role in tRNA 3'-end maturation. Removes nucleotide residues following the 3'-CCA terminus of tRNAs; can also add nucleotides to the ends of RNA molecules by using nucleoside diphosphates as substrates, but this may not be physiologically important. Probably plays a role in initiation of 16S rRNA degradation (leading to ribosome degradation) during starvation. The protein is Ribonuclease PH of Photorhabdus laumondii subsp. laumondii (strain DSM 15139 / CIP 105565 / TT01) (Photorhabdus luminescens subsp. laumondii).